The chain runs to 427 residues: Glutamate-1-semialdehyde 2,1-aminomutase (427 aa).

The residue at position 267 (K267) is an N6-(pyridoxal phosphate)lysine.

The protein belongs to the class-III pyridoxal-phosphate-dependent aminotransferase family. HemL subfamily. In terms of assembly, homodimer. Pyridoxal 5'-phosphate is required as a cofactor.

The protein resides in the cytoplasm. It carries out the reaction (S)-4-amino-5-oxopentanoate = 5-aminolevulinate. Its pathway is porphyrin-containing compound metabolism; protoporphyrin-IX biosynthesis; 5-aminolevulinate from L-glutamyl-tRNA(Glu): step 2/2. The protein is Glutamate-1-semialdehyde 2,1-aminomutase of Geobacter sulfurreducens (strain ATCC 51573 / DSM 12127 / PCA).